The following is a 264-amino-acid chain: S-adenosylmethionine decarboxylase proenzyme (264 aa).

Ser112 serves as the catalytic Schiff-base intermediate with substrate; via pyruvic acid. The residue at position 112 (Ser112) is a Pyruvic acid (Ser); by autocatalysis. Catalysis depends on His117, which acts as the Proton acceptor; for processing activity. Cys140 acts as the Proton donor; for catalytic activity in catalysis.

This sequence belongs to the prokaryotic AdoMetDC family. Type 2 subfamily. Heterooctamer of four alpha and four beta chains arranged as a tetramer of alpha/beta heterodimers. The cofactor is pyruvate. In terms of processing, is synthesized initially as an inactive proenzyme. Formation of the active enzyme involves a self-maturation process in which the active site pyruvoyl group is generated from an internal serine residue via an autocatalytic post-translational modification. Two non-identical subunits are generated from the proenzyme in this reaction, and the pyruvate is formed at the N-terminus of the alpha chain, which is derived from the carboxyl end of the proenzyme. The post-translation cleavage follows an unusual pathway, termed non-hydrolytic serinolysis, in which the side chain hydroxyl group of the serine supplies its oxygen atom to form the C-terminus of the beta chain, while the remainder of the serine residue undergoes an oxidative deamination to produce ammonia and the pyruvoyl group blocking the N-terminus of the alpha chain.

The enzyme catalyses S-adenosyl-L-methionine + H(+) = S-adenosyl 3-(methylsulfanyl)propylamine + CO2. It functions in the pathway amine and polyamine biosynthesis; S-adenosylmethioninamine biosynthesis; S-adenosylmethioninamine from S-adenosyl-L-methionine: step 1/1. Its function is as follows. Catalyzes the decarboxylation of S-adenosylmethionine to S-adenosylmethioninamine (dcAdoMet), the propylamine donor required for the synthesis of the polyamines spermine and spermidine from the diamine putrescine. The chain is S-adenosylmethionine decarboxylase proenzyme from Sodalis glossinidius (strain morsitans).